A 393-amino-acid chain; its full sequence is Chorismate synthase (393 aa).

Residues Arg39 and Arg45 each contribute to the NADP(+) site. FMN contacts are provided by residues 133-135 (RSS), 256-257 (NA), Gly301, 316-320 (KPIPT), and Arg342.

It belongs to the chorismate synthase family. In terms of assembly, homotetramer. FMNH2 is required as a cofactor.

The catalysed reaction is 5-O-(1-carboxyvinyl)-3-phosphoshikimate = chorismate + phosphate. It participates in metabolic intermediate biosynthesis; chorismate biosynthesis; chorismate from D-erythrose 4-phosphate and phosphoenolpyruvate: step 7/7. Catalyzes the anti-1,4-elimination of the C-3 phosphate and the C-6 proR hydrogen from 5-enolpyruvylshikimate-3-phosphate (EPSP) to yield chorismate, which is the branch point compound that serves as the starting substrate for the three terminal pathways of aromatic amino acid biosynthesis. This reaction introduces a second double bond into the aromatic ring system. This chain is Chorismate synthase, found in Lysinibacillus sphaericus (strain C3-41).